Here is a 37-residue protein sequence, read N- to C-terminus: Calcitonin gene-related peptide 1 (37 aa).

A disulfide bond links Cys-2 and Cys-7. Phenylalanine amide is present on Phe-37.

The protein belongs to the calcitonin family.

It is found in the secreted. Functionally, CGRP1/CALCA is a peptide hormone that induces vasodilation mediated by the CALCRL-RAMP1 receptor complex. Dilates a variety of vessels including the coronary, cerebral and systemic vasculature. Its abundance in the CNS also points toward a neurotransmitter or neuromodulator role. It also elevates platelet cAMP. CGRP1 can also bind and activate CALCR-RAMP1 (AMYR1) receptor complex. In Sus scrofa (Pig), this protein is Calcitonin gene-related peptide 1 (CALCA).